The following is a 98-amino-acid chain: Integration host factor subunit alpha (98 aa).

The span at 53-69 shows a compositional bias: basic and acidic residues; it reads DLREKSERPGRNPKTGE. The tract at residues 53 to 73 is disordered; sequence DLREKSERPGRNPKTGEDIPI.

This sequence belongs to the bacterial histone-like protein family. Heterodimer of an alpha and a beta chain.

This protein is one of the two subunits of integration host factor, a specific DNA-binding protein that functions in genetic recombination as well as in transcriptional and translational control. This is Integration host factor subunit alpha from Aliivibrio salmonicida (strain LFI1238) (Vibrio salmonicida (strain LFI1238)).